The primary structure comprises 178 residues: Ribosome maturation factor RimM (178 aa).

The 78-residue stretch at 101-178 (DGEYYWYQLQ…EMQVDWDADF (78 aa)) folds into the PRC barrel domain.

This sequence belongs to the RimM family. Binds ribosomal protein uS19.

It localises to the cytoplasm. Functionally, an accessory protein needed during the final step in the assembly of 30S ribosomal subunit, possibly for assembly of the head region. Essential for efficient processing of 16S rRNA. May be needed both before and after RbfA during the maturation of 16S rRNA. It has affinity for free ribosomal 30S subunits but not for 70S ribosomes. This is Ribosome maturation factor RimM from Stutzerimonas stutzeri (strain A1501) (Pseudomonas stutzeri).